The primary structure comprises 215 residues: Pyridoxine/pyridoxamine 5'-phosphate oxidase (215 aa).

Substrate contacts are provided by residues 11–14 (RRDY) and Lys-69. Residues 64–69 (RVVLLK), 79–80 (YT), Lys-86, and Gln-108 each bind FMN. Residues Tyr-126, Arg-130, and Ser-134 each coordinate substrate. Residues 143–144 (QS) and Trp-188 each bind FMN. 194–196 (RLH) is a substrate binding site. Position 198 (Arg-198) interacts with FMN.

The protein belongs to the pyridoxamine 5'-phosphate oxidase family. As to quaternary structure, homodimer. FMN is required as a cofactor.

The enzyme catalyses pyridoxamine 5'-phosphate + O2 + H2O = pyridoxal 5'-phosphate + H2O2 + NH4(+). It carries out the reaction pyridoxine 5'-phosphate + O2 = pyridoxal 5'-phosphate + H2O2. It participates in cofactor metabolism; pyridoxal 5'-phosphate salvage; pyridoxal 5'-phosphate from pyridoxamine 5'-phosphate: step 1/1. It functions in the pathway cofactor metabolism; pyridoxal 5'-phosphate salvage; pyridoxal 5'-phosphate from pyridoxine 5'-phosphate: step 1/1. Its function is as follows. Catalyzes the oxidation of either pyridoxine 5'-phosphate (PNP) or pyridoxamine 5'-phosphate (PMP) into pyridoxal 5'-phosphate (PLP). This is Pyridoxine/pyridoxamine 5'-phosphate oxidase from Legionella pneumophila (strain Paris).